Here is a 443-residue protein sequence, read N- to C-terminus: Frizzled/smoothened-like sans CRD protein E (443 aa).

A signal peptide spans 1 to 23; sequence MISHIKKFINLYTIVFLLYILYS. The Extracellular portion of the chain corresponds to 24 to 83; that stretch reads NENFFVKGQKLPPGFCPSPLIYRNTTDRQSDIDIGFQFLGETNCVQPCPSLILTENEWNK. A glycan (N-linked (GlcNAc...) asparagine) is linked at Asn-47. The helical transmembrane segment at 84–104 threads the bilayer; the sequence is VFNMSLVAGTISMFALIFLII. At 105 to 120 the chain is on the cytoplasmic side; that stretch reads TYSPLVNNIKDYTRHT. Residues 121–141 form a helical membrane-spanning segment; the sequence is VGILFLFSGILIAMTTDGRQL. Over 142–166 the chain is Extracellular; sequence WDIDLGFKKYCPEPGRFARQSDSKC. Residues 167 to 187 form a helical membrane-spanning segment; it reads LVTAIFFQFGCVTALLWWAAI. Topologically, residues 188–203 are cytoplasmic; the sequence is SVDLWITIKKIKISKK. Residues 204 to 224 form a helical membrane-spanning segment; that stretch reads LFIIYTIAVNIVTIVLTFGPV. Over 225-248 the chain is Extracellular; sequence GSKQYGYIDAAIGCWLMDLKYQVG. A helical membrane pass occupies residues 249-269; the sequence is YFWAPVGFCLCVGCVSIVLIL. Topologically, residues 270–289 are cytoplasmic; sequence KEIYNVSDAVKKKLLAKHLK. A helical membrane pass occupies residues 290-310; it reads PLMLIILMLTEFIYMFIFYSY. The Extracellular portion of the chain corresponds to 311–350; sequence TTSKKNHYHDIIEEYVVCLFVHAANPSVCKIGSTISPSAH. The helical transmembrane segment at 351 to 371 threads the bilayer; the sequence is FFFHLCIRLMGLEVLIFYGFT. Over 372-443 the chain is Cytoplasmic; sequence RQTRKIWMRS…SGIDDSKHDP (72 aa). Low complexity-rich tracts occupy residues 397-410 and 419-432; these read SSSNDSKSSNNKTS and ESSEQSNEPEQSIE. Residues 397-443 are disordered; sequence SSSNDSKSSNNKTSGRVTGGFGESSEQSNEPEQSIELSGIDDSKHDP.

It belongs to the G-protein coupled receptor Fz/Smo family.

It is found in the membrane. This chain is Frizzled/smoothened-like sans CRD protein E (fscE), found in Dictyostelium discoideum (Social amoeba).